We begin with the raw amino-acid sequence, 715 residues long: 1,4-alpha-glucan branching enzyme GlgB (715 aa).

The Nucleophile role is filled by Asp-396. Glu-449 serves as the catalytic Proton donor.

It belongs to the glycosyl hydrolase 13 family. GlgB subfamily. As to quaternary structure, monomer.

It carries out the reaction Transfers a segment of a (1-&gt;4)-alpha-D-glucan chain to a primary hydroxy group in a similar glucan chain.. It participates in glycan biosynthesis; glycogen biosynthesis. Its function is as follows. Catalyzes the formation of the alpha-1,6-glucosidic linkages in glycogen by scission of a 1,4-alpha-linked oligosaccharide from growing alpha-1,4-glucan chains and the subsequent attachment of the oligosaccharide to the alpha-1,6 position. This Aliivibrio fischeri (strain ATCC 700601 / ES114) (Vibrio fischeri) protein is 1,4-alpha-glucan branching enzyme GlgB.